The primary structure comprises 1802 residues: Transposon Ty4-H Gag-Pol polyprotein (1802 aa).

Positions 39–115 (RKVSIKDEQV…IQLLETNENN (77 aa)) form a coiled coil. A ty4 protease region spans residues 381–501 (NNNLSPVQNE…KTKMVLSRKY (121 aa)). D414 serves as the catalytic For protease activity; shared with dimeric partner. The tract at residues 539–599 (AIKPTSSPGF…EPNEFWCQTC (61 aa)) is integrase-type zinc finger-like. Residues 619 to 786 (TDHEPGSSWC…LPLKAISRQP (168 aa)) enclose the Integrase catalytic domain. Positions 630 and 695 each coordinate Mg(2+). Positions 1223-1248 (KRKRKRHDKNNSLTSYELERDKKRSK) are disordered. Positions 1375 to 1510 (RNMFMKTLDI…DILGMDLVYN (136 aa)) constitute a Reverse transcriptase Ty1/copia-type domain. 6 residues coordinate Mg(2+): D1383, D1462, D1463, D1644, E1686, and D1720. Positions 1644-1790 (DASVGSEYDA…KRFIQVLKNK (147 aa)) constitute an RNase H Ty1/copia-type domain.

The protease is a homodimer, whose active site consists of two apposed aspartic acid residues. Proteolytically processed into capsid protein (CA), Ty4 protease (PR), integrase (IN) and reverse transcriptase/ribonuclease H (RT) proteins. Initially, virus-like particles (VLPs) are composed of the structural unprocessed proteins Gag and Gag-Pol, and also contain the host initiator methionine tRNA (tRNA(i)-Met) which serves as a primer for minus-strand DNA synthesis, and a dimer of genomic Ty RNA. Processing of the polyproteins occurs within the particle and proceeds by an ordered pathway, called maturation. First, the protease (PR) is released by autocatalytic cleavage of the Gag-Pol polyprotein, and this cleavage is a prerequisite for subsequent processing at the remaining sites to release the mature structural and catalytic proteins. Maturation takes place prior to the RT reaction and is required to produce transposition-competent VLPs.

The protein localises to the cytoplasm. It is found in the nucleus. The catalysed reaction is DNA(n) + a 2'-deoxyribonucleoside 5'-triphosphate = DNA(n+1) + diphosphate. It carries out the reaction Endonucleolytic cleavage to 5'-phosphomonoester.. Its function is as follows. Capsid protein (CA) is the structural component of the virus-like particle (VLP), forming the shell that encapsulates the retrotransposons dimeric RNA genome. Functionally, the aspartyl protease (PR) mediates the proteolytic cleavages of the Gag and Gag-Pol polyproteins after assembly of the VLP. In terms of biological role, reverse transcriptase/ribonuclease H (RT) is a multifunctional enzyme that catalyzes the conversion of the retro-elements RNA genome into dsDNA within the VLP. The enzyme displays a DNA polymerase activity that can copy either DNA or RNA templates, and a ribonuclease H (RNase H) activity that cleaves the RNA strand of RNA-DNA heteroduplexes during plus-strand synthesis and hydrolyzes RNA primers. The conversion leads to a linear dsDNA copy of the retrotransposon that includes long terminal repeats (LTRs) at both ends. Integrase (IN) targets the VLP to the nucleus, where a subparticle preintegration complex (PIC) containing at least integrase and the newly synthesized dsDNA copy of the retrotransposon must transit the nuclear membrane. Once in the nucleus, integrase performs the integration of the dsDNA into the host genome. This is Transposon Ty4-H Gag-Pol polyprotein (TY4B-H) from Saccharomyces cerevisiae (strain ATCC 204508 / S288c) (Baker's yeast).